A 473-amino-acid polypeptide reads, in one-letter code: MENLSNPDENDDHQSPRSIDQNDQSAVETPVYSTMSIDSFVYPRTCSETTSGFSDQIDETNSFCSEASPCNWPVLTESKSSKCLSGLEMQSNECLVVQEISEPELETMKERFAKLLLGEDMSGSGKGVCTAVTISNAITNLYATVFGQNLRLEPLETEKRALWKREMNCLLSVCDYIVEFIPRCQNLSNGATVEVMESRPRADIYINLPALRKLDSMLMEALDSFQNTEFWYAEEGSLSMKSARSSTGSFRKVIVQRKEEKWWLPVPLVPSEGLSDKARKQLKNKRESTNQIHKAAMAINSSILSEMEIPDSYMTTLPKCGKSSVGDSIYRYMSGSGRFFPEQLLDCLNISSEHEAVQLADRVEASMYTWRRKSCLSNSKNSWNMVKDLMSTTERTDKNYVMAERAETLLFCLKQRYPELSQTSLDICKIQYNKDVGKAVLESYSRVLEGLAFNIVAWIDDVLYVDKTMRGSE.

Residues Met-1–Glu-28 are disordered. Residues Pro-16–Glu-28 show a composition bias toward polar residues. Positions Leu-95–Glu-473 constitute a PRONE domain.

Its function is as follows. Guanine-nucleotide exchange factor (GEF) that acts as an activator of Rop (Rho of plants) GTPases by promoting the exchange of GDP for GTP. The protein is Rop guanine nucleotide exchange factor 3 (ROPGEF3) of Arabidopsis thaliana (Mouse-ear cress).